The chain runs to 440 residues: GTPase Der (440 aa).

EngA-type G domains lie at 4 to 168 and 177 to 352; these read PIVA…PENK and IKVA…NQRA. Residues 10–17, 57–61, 120–123, 183–190, 230–234, and 295–298 each bind GTP; these read GRPNVGKS, DTGGI, NKVD, GKPNVGKS, DTAGL, and NKWD. Positions 353 to 437 constitute a KH-like domain; that stretch reads MRVPTGGLNE…PIRFIYREKS (85 aa).

It belongs to the TRAFAC class TrmE-Era-EngA-EngB-Septin-like GTPase superfamily. EngA (Der) GTPase family. In terms of assembly, associates with the 50S ribosomal subunit.

GTPase that plays an essential role in the late steps of ribosome biogenesis. The sequence is that of GTPase Der from Alkaliphilus metalliredigens (strain QYMF).